The primary structure comprises 902 residues: MLSPQRALLCNLNHIHLQHVSLGLHLSRRPELQEGPLSTPPPPGDTGGKESRGPCSGTLVDANSNSPAVPCRCCQEHGPGLENRQDPSQEEEGAASPSDPGCSSSLSSCSDLSPDESPVSVYLRDLPGDEDAHPQPSIIPLEQGSPLASAGPGTCSPDSFCCSPDSCSGASSSPDPGLDSNCNALTTCQDVPSPGLEEEDERAEQDLPTSELLEADDGKIDAGKTEPSWKINPIWKIDTEKTKAEWKTTENNNTGWKNNGNVNSSWKSEPEKFDSGWKTNTRITDSGSKTDAGKIDGGWRSDVSEEPVPHRTITSFHELAQKRKRGPGLPLVPQAKKDRSDWLIVFSPDTELPPSGSPGGSSAPPREVTTFKELRSRSRAPAPPVPPRDPPVGWALVPPRPPPPPVPPRRKKNRPGLQPIAEGQSEEGRAVSPAAGEEAPAAKEPGAQAGLEVRSSWSFAGVPGAQRLWMAEAQSGTGQLQEQKKGLLIAVSVSVDKIISHFGAARNLVQKAQLGDSRLSPDVGHLVLTTLCPALHALVADGLKPFRKDLITGQRRSSPWSVVEASVKPGSSTRSLGTLYSQVSRLAPLSSSRSRFHAFILGLLNTKQLELWFSSLQEDAGLLSLLYLPTGFFSLARGGCPSLSTELLLLLQPLSVLTFHLDLLFEHHHHLPLGPPQAPAPPGPPPALQQTMQAMLHFGGRLAQSLRGTSKEAASDPSDSPNLPTPGSWWEQLTQASRVYASGGTEGFPLSRWAPGRHGTAAEEGAQERPLPTDEMAPGRGLWLGRLFGVPGGPAENENGALKSRRPSSWLPPTVSVLALVKRGAPPEMPSPQELEASAPRMVQTHRAVRALCDHTAARPDQLSFRRGEVLRVITTVDEDWLRCGRDGMEGLVPVGYTSLVL.

4 disordered regions span residues 31 to 67, 81 to 155, 189 to 227, and 247 to 450; these read ELQE…SNSP, LENR…PGTC, QDVP…KTEP, and KTTE…AQAG. Low complexity predominate over residues 94–112; that stretch reads AASPSDPGCSSSLSSCSDL. Over residues 249–261 the composition is skewed to low complexity; sequence TENNNTGWKNNGN. Positions 277-289 are enriched in polar residues; the sequence is WKTNTRITDSGSK. The segment covering 291-309 has biased composition (basic and acidic residues); that stretch reads DAGKIDGGWRSDVSEEPVP. 2 stretches are compositionally biased toward pro residues: residues 381–390 and 398–407; these read PAPPVPPRDP and PPRPPPPPVP. The span at 433 to 450 shows a compositional bias: low complexity; the sequence is PAAGEEAPAAKEPGAQAG. The segment at 470 to 605 is interaction with TRAF6; the sequence is MAEAQSGTGQ…FHAFILGLLN (136 aa). Positions 522–666 constitute an RUN domain; that stretch reads DVGHLVLTTL…LTFHLDLLFE (145 aa). The interaction with IKBKG stretch occupies residues 606–672; sequence TKQLELWFSS…LLFEHHHHLP (67 aa). Disordered regions lie at residues 706-729 and 747-776; these read LRGT…PGSW and GFPL…TDEM. The SH3 domain occupies 844–902; that stretch reads QTHRAVRALCDHTAARPDQLSFRRGEVLRVITTVDEDWLRCGRDGMEGLVPVGYTSLVL.

In terms of assembly, associated component of the adapter-like complex 4 (AP-4). Interacts with IKBKG and TRAF6. Interacts with F-actin, acetylated actin, TUBB3, STX1A, KIF5B and KLC1. Post-translationally, phosphorylated on serine residues following nuclear translocation. In terms of processing, polyubiquitinated; polyubiquitination involves TRAF6. As to expression, predominantly expressed in brain.

Its subcellular location is the cytoplasm. The protein localises to the nucleus. It is found in the cytoskeleton. It localises to the cytoplasmic vesicle. The protein resides in the early endosome. Its subcellular location is the postsynaptic density. The protein localises to the golgi apparatus. Functionally, associates with the adapter-like complex 4 (AP-4) and may therefore play a role in vesicular trafficking of proteins at the trans-Golgi network. Signaling adapter which plays a role in neuronal differentiation. Involved in regulation of NGF-dependent neurite outgrowth. May play a role in neuronal vesicular trafficking, specifically involving pre-synaptic membrane proteins. Seems to be involved in signaling pathways that are regulated by the prolonged activation of MAPK. Can regulate the polyubiquitination of IKBKG and thus may be involved in regulation of the NF-kappa-B pathway. This is AP-4 complex accessory subunit RUSC1 from Homo sapiens (Human).